The chain runs to 1052 residues: Carbamoyl phosphate synthase large chain (1052 aa).

The segment at 1 to 399 (MRENVKRVLV…ALQKAVRMLD (399 aa)) is carboxyphosphate synthetic domain. The ATP site is built by R127, R167, G173, G174, K206, L208, E213, G239, V240, H241, Q282, and E296. The 195-residue stretch at 131–325 (RETMINVNLP…LAYVSAKLAL (195 aa)) folds into the ATP-grasp 1 domain. Residues Q282, E296, and N298 each contribute to the Mg(2+) site. Residues Q282, E296, and N298 each contribute to the Mn(2+) site. An oligomerization domain region spans residues 400-548 (LGEPGIIGGK…VTYNGTEDDI (149 aa)). The tract at residues 549-930 (EFSNGIRKLL…LKSWLSSSPN (382 aa)) is carbamoyl phosphate synthetic domain. In terms of domain architecture, ATP-grasp 2 spans 674–864 (SRLLDKLGIK…IIDLALTGVI (191 aa)). Residues R710, K749, I751, E756, G780, V781, H782, S783, Q823, and E835 each contribute to the ATP site. 3 residues coordinate Mg(2+): Q823, E835, and N837. Mn(2+) is bound by residues Q823, E835, and N837. The 123-residue stretch at 930–1052 (NRLPDQKGIA…YEIGEYGAGI (123 aa)) folds into the MGS-like domain. The segment at 931–1052 (RLPDQKGIAL…YEIGEYGAGI (122 aa)) is allosteric domain.

This sequence belongs to the CarB family. In terms of assembly, composed of two chains; the small (or glutamine) chain promotes the hydrolysis of glutamine to ammonia, which is used by the large (or ammonia) chain to synthesize carbamoyl phosphate. Tetramer of heterodimers (alpha,beta)4. Mg(2+) is required as a cofactor. It depends on Mn(2+) as a cofactor.

The catalysed reaction is hydrogencarbonate + L-glutamine + 2 ATP + H2O = carbamoyl phosphate + L-glutamate + 2 ADP + phosphate + 2 H(+). It carries out the reaction hydrogencarbonate + NH4(+) + 2 ATP = carbamoyl phosphate + 2 ADP + phosphate + 2 H(+). Its pathway is amino-acid biosynthesis; L-arginine biosynthesis; carbamoyl phosphate from bicarbonate: step 1/1. It functions in the pathway pyrimidine metabolism; UMP biosynthesis via de novo pathway; (S)-dihydroorotate from bicarbonate: step 1/3. Large subunit of the glutamine-dependent carbamoyl phosphate synthetase (CPSase). CPSase catalyzes the formation of carbamoyl phosphate from the ammonia moiety of glutamine, carbonate, and phosphate donated by ATP, constituting the first step of 2 biosynthetic pathways, one leading to arginine and/or urea and the other to pyrimidine nucleotides. The large subunit (synthetase) binds the substrates ammonia (free or transferred from glutamine from the small subunit), hydrogencarbonate and ATP and carries out an ATP-coupled ligase reaction, activating hydrogencarbonate by forming carboxy phosphate which reacts with ammonia to form carbamoyl phosphate. The sequence is that of Carbamoyl phosphate synthase large chain from Sulfolobus acidocaldarius (strain ATCC 33909 / DSM 639 / JCM 8929 / NBRC 15157 / NCIMB 11770).